The primary structure comprises 950 residues: Bifunctional glutamine synthetase adenylyltransferase/adenylyl-removing enzyme (950 aa).

An adenylyl removase region spans residues 1-443; the sequence is MSLPSPLLPV…VFVTLIGDEE (443 aa). The interval 450–950 is adenylyl transferase; it reads ERHFNELWDM…WQEWLESSTI (501 aa).

The protein belongs to the GlnE family. Requires Mg(2+) as cofactor.

The catalysed reaction is [glutamine synthetase]-O(4)-(5'-adenylyl)-L-tyrosine + phosphate = [glutamine synthetase]-L-tyrosine + ADP. The enzyme catalyses [glutamine synthetase]-L-tyrosine + ATP = [glutamine synthetase]-O(4)-(5'-adenylyl)-L-tyrosine + diphosphate. Involved in the regulation of glutamine synthetase GlnA, a key enzyme in the process to assimilate ammonia. When cellular nitrogen levels are high, the C-terminal adenylyl transferase (AT) inactivates GlnA by covalent transfer of an adenylyl group from ATP to specific tyrosine residue of GlnA, thus reducing its activity. Conversely, when nitrogen levels are low, the N-terminal adenylyl removase (AR) activates GlnA by removing the adenylyl group by phosphorolysis, increasing its activity. The regulatory region of GlnE binds the signal transduction protein PII (GlnB) which indicates the nitrogen status of the cell. The polypeptide is Bifunctional glutamine synthetase adenylyltransferase/adenylyl-removing enzyme (Vibrio vulnificus (strain YJ016)).